The sequence spans 329 residues: HTH-type transcriptional regulator ArgR (329 aa).

In terms of domain architecture, HTH araC/xylS-type spans 214 to 312; sequence TQAVLLMEAN…GVTPREDRNQ (99 aa). 2 DNA-binding regions (H-T-H motif) span residues 231 to 252 and 279 to 302; these read DEIA…KQYL and IIQI…RNFF. The interval 307-329 is disordered; it reads REDRNQRRGGSAFETTFTPVERG. Residues 319–329 are compositionally biased toward polar residues; the sequence is FETTFTPVERG.

Its function is as follows. ArgR could be a transcriptional activator of the dauBAR operon in response to the presence of L-Arg. This is HTH-type transcriptional regulator ArgR (argR) from Pseudomonas aeruginosa (strain ATCC 15692 / DSM 22644 / CIP 104116 / JCM 14847 / LMG 12228 / 1C / PRS 101 / PAO1).